A 137-amino-acid polypeptide reads, in one-letter code: Large ribosomal subunit protein uL16 (137 aa).

Residues 1 to 16 (MLQPKRTKFRKMQKGR) show a composition bias toward basic residues. The tract at residues 1-22 (MLQPKRTKFRKMQKGRIRGEAK) is disordered.

The protein belongs to the universal ribosomal protein uL16 family. As to quaternary structure, part of the 50S ribosomal subunit.

Functionally, binds 23S rRNA and is also seen to make contacts with the A and possibly P site tRNAs. The chain is Large ribosomal subunit protein uL16 from Jannaschia sp. (strain CCS1).